Reading from the N-terminus, the 373-residue chain is Histidinol-phosphate aminotransferase (373 aa).

Residue Lys-233 is modified to N6-(pyridoxal phosphate)lysine.

This sequence belongs to the class-II pyridoxal-phosphate-dependent aminotransferase family. Histidinol-phosphate aminotransferase subfamily. In terms of assembly, homodimer. Pyridoxal 5'-phosphate serves as cofactor.

The catalysed reaction is L-histidinol phosphate + 2-oxoglutarate = 3-(imidazol-4-yl)-2-oxopropyl phosphate + L-glutamate. It functions in the pathway amino-acid biosynthesis; L-histidine biosynthesis; L-histidine from 5-phospho-alpha-D-ribose 1-diphosphate: step 7/9. The chain is Histidinol-phosphate aminotransferase from Nitratidesulfovibrio vulgaris (strain DP4) (Desulfovibrio vulgaris).